A 270-amino-acid chain; its full sequence is MMAHLAPLFLLLLLLLLPLHAAATPSAHPAYPNEPPSCAAAVPVPERREAHGGGRILDITHYYREDMPSWESDGGVGQFLWLPASMRNGSRANNSEMRLPTHTGTHVDAPGHVFQHYFDAGFDVDSLDLEVLNGLALLVDVPRDDNITAKMMESLHIPKGIQRVLFRTLNTDRQLMWKKEFDTSYVGFMEDGAQWLVDNTDIKLVGIDYLSVAAFDDLIPSHLVLLKNRDIILVEGLKLENIMPGIYSLHCLPLRLRGAEGSPIRCILIK.

The signal sequence occupies residues 1-23 (MMAHLAPLFLLLLLLLLPLHAAA).

This sequence belongs to the Cyclase 1 superfamily. In terms of tissue distribution, highly expressed in leaf sheaths. leaf collars and flag leaves. Expressed in roots, stems, glumes, young panicles and pistils.

It localises to the secreted. It is found in the extracellular space. The protein resides in the extracellular matrix. Functionally, may be involved in response to stresses. The protein is Cyclase-like protein 3 of Oryza sativa subsp. japonica (Rice).